The sequence spans 188 residues: Inner membrane-spanning protein YciB (188 aa).

5 helical membrane passes run 22 to 42, 50 to 70, 72 to 92, 121 to 141, and 149 to 169; these read IYIA…VTWM, MTLV…VFHN, LFIK…LLVS, FAWA…AFWL, and FKVF…GVYI.

The protein belongs to the YciB family.

The protein localises to the cell inner membrane. Functionally, plays a role in cell envelope biogenesis, maintenance of cell envelope integrity and membrane homeostasis. The protein is Inner membrane-spanning protein YciB of Pectobacterium carotovorum subsp. carotovorum (strain PC1).